The primary structure comprises 272 residues: Tryptophan synthase alpha chain (272 aa).

Active-site proton acceptor residues include Glu-49 and Glu-60.

Belongs to the TrpA family. In terms of assembly, tetramer of two alpha and two beta chains.

It catalyses the reaction (1S,2R)-1-C-(indol-3-yl)glycerol 3-phosphate + L-serine = D-glyceraldehyde 3-phosphate + L-tryptophan + H2O. It functions in the pathway amino-acid biosynthesis; L-tryptophan biosynthesis; L-tryptophan from chorismate: step 5/5. Functionally, the alpha subunit is responsible for the aldol cleavage of indoleglycerol phosphate to indole and glyceraldehyde 3-phosphate. This is Tryptophan synthase alpha chain from Legionella pneumophila (strain Corby).